A 352-amino-acid polypeptide reads, in one-letter code: tRNA N6-adenosine threonylcarbamoyltransferase (352 aa).

Positions 115 and 119 each coordinate Fe cation. Residues 137 to 141 (LVSGG), D170, G183, and N281 each bind substrate. A Fe cation-binding site is contributed by D309.

It belongs to the KAE1 / TsaD family. Requires Fe(2+) as cofactor.

The protein localises to the cytoplasm. The enzyme catalyses L-threonylcarbamoyladenylate + adenosine(37) in tRNA = N(6)-L-threonylcarbamoyladenosine(37) in tRNA + AMP + H(+). Functionally, required for the formation of a threonylcarbamoyl group on adenosine at position 37 (t(6)A37) in tRNAs that read codons beginning with adenine. Is involved in the transfer of the threonylcarbamoyl moiety of threonylcarbamoyl-AMP (TC-AMP) to the N6 group of A37, together with TsaE and TsaB. TsaD likely plays a direct catalytic role in this reaction. In Methylocapsa acidiphila, this protein is tRNA N6-adenosine threonylcarbamoyltransferase.